We begin with the raw amino-acid sequence, 352 residues long: 7,8-didemethyl-8-hydroxy-5-deazariboflavin synthase (352 aa).

Residues 35 to 275 (ITFSKNAFIP…EDISIQVPPN (241 aa)) form the Radical SAM core domain. [4Fe-4S] cluster is bound by residues cysteine 49, cysteine 53, and cysteine 56.

Belongs to the radical SAM superfamily. CofG family. In terms of assembly, consists of two subunits, CofG and CofH. The cofactor is [4Fe-4S] cluster.

It catalyses the reaction 5-amino-5-(4-hydroxybenzyl)-6-(D-ribitylimino)-5,6-dihydrouracil + S-adenosyl-L-methionine = 7,8-didemethyl-8-hydroxy-5-deazariboflavin + 5'-deoxyadenosine + L-methionine + NH4(+) + H(+). It participates in cofactor biosynthesis; coenzyme F0 biosynthesis. In terms of biological role, catalyzes the radical-mediated synthesis of 7,8-didemethyl-8-hydroxy-5-deazariboflavin from 5-amino-5-(4-hydroxybenzyl)-6-(D-ribitylimino)-5,6-dihydrouracil. This Methanococcus maripaludis (strain C6 / ATCC BAA-1332) protein is 7,8-didemethyl-8-hydroxy-5-deazariboflavin synthase.